The sequence spans 869 residues: Valine--tRNA ligase (869 aa).

The short motif at 47 to 57 (PYPTGNFHIGN) is the 'HIGH' region element. The 'KMSKS' region motif lies at 521 to 525 (KMSKS). Lys-524 contacts ATP.

This sequence belongs to the class-I aminoacyl-tRNA synthetase family. ValS type 2 subfamily.

It is found in the cytoplasm. The enzyme catalyses tRNA(Val) + L-valine + ATP = L-valyl-tRNA(Val) + AMP + diphosphate. Functionally, catalyzes the attachment of valine to tRNA(Val). As ValRS can inadvertently accommodate and process structurally similar amino acids such as threonine, to avoid such errors, it has a 'posttransfer' editing activity that hydrolyzes mischarged Thr-tRNA(Val) in a tRNA-dependent manner. The protein is Valine--tRNA ligase of Methanosarcina acetivorans (strain ATCC 35395 / DSM 2834 / JCM 12185 / C2A).